The chain runs to 214 residues: Large ribosomal subunit protein uL3 (214 aa).

The residue at position 151 (glutamine 151) is an N5-methylglutamine.

Belongs to the universal ribosomal protein uL3 family. As to quaternary structure, part of the 50S ribosomal subunit. Forms a cluster with proteins L14 and L19. In terms of processing, methylated by PrmB.

Functionally, one of the primary rRNA binding proteins, it binds directly near the 3'-end of the 23S rRNA, where it nucleates assembly of the 50S subunit. In Magnetococcus marinus (strain ATCC BAA-1437 / JCM 17883 / MC-1), this protein is Large ribosomal subunit protein uL3.